A 229-amino-acid chain; its full sequence is Acetylornithine aminotransferase (229 aa).

Pyridoxal 5'-phosphate-binding positions include 95 to 96 and Phe122; that span reads GA. Arg125 provides a ligand contact to N(2)-acetyl-L-ornithine. 208-211 serves as a coordination point for pyridoxal 5'-phosphate; the sequence is DEIQ.

Belongs to the class-III pyridoxal-phosphate-dependent aminotransferase family. ArgD subfamily. Homodimer. It depends on pyridoxal 5'-phosphate as a cofactor.

The protein localises to the cytoplasm. It catalyses the reaction N(2)-acetyl-L-ornithine + 2-oxoglutarate = N-acetyl-L-glutamate 5-semialdehyde + L-glutamate. Its pathway is amino-acid biosynthesis; L-arginine biosynthesis; N(2)-acetyl-L-ornithine from L-glutamate: step 4/4. The chain is Acetylornithine aminotransferase (argD) from Bacillus amyloliquefaciens (Bacillus velezensis).